Consider the following 273-residue polypeptide: Pantothenate synthetase (273 aa).

Residue 27–34 (MGALHEGH) coordinates ATP. The active-site Proton donor is H34. Q58 provides a ligand contact to (R)-pantoate. Beta-alanine is bound at residue Q58. Position 144–147 (144–147 (GKKD)) interacts with ATP. Residue Q150 coordinates (R)-pantoate. Residues V173 and 181 to 184 (LSSR) each bind ATP.

The protein belongs to the pantothenate synthetase family. Homodimer.

It localises to the cytoplasm. It carries out the reaction (R)-pantoate + beta-alanine + ATP = (R)-pantothenate + AMP + diphosphate + H(+). The protein operates within cofactor biosynthesis; (R)-pantothenate biosynthesis; (R)-pantothenate from (R)-pantoate and beta-alanine: step 1/1. Catalyzes the condensation of pantoate with beta-alanine in an ATP-dependent reaction via a pantoyl-adenylate intermediate. The protein is Pantothenate synthetase of Sulfurimonas denitrificans (strain ATCC 33889 / DSM 1251) (Thiomicrospira denitrificans (strain ATCC 33889 / DSM 1251)).